The chain runs to 40 residues: Photosystem II reaction center protein Psb30 (40 aa).

The chain crosses the membrane as a helical span at residues 12-32 (VIFQLTSVALIIIAGPAVIFV).

The protein belongs to the Psb30/Ycf12 family. As to quaternary structure, PSII is composed of 1 copy each of membrane proteins PsbA, PsbB, PsbC, PsbD, PsbE, PsbF, PsbH, PsbI, PsbJ, PsbK, PsbL, PsbM, PsbT, PsbX, PsbY, PsbZ, Psb30/Ycf12, peripheral proteins PsbO, CyanoQ (PsbQ), PsbU, PsbV and a large number of cofactors. It forms dimeric complexes.

Its subcellular location is the cellular thylakoid membrane. A core subunit of photosystem II (PSII), probably helps stabilize the reaction center. The chain is Photosystem II reaction center protein Psb30 from Nostoc sp. (strain PCC 7120 / SAG 25.82 / UTEX 2576).